The chain runs to 178 residues: Inorganic pyrophosphatase (178 aa).

The substrate site is built by Lys30, Arg44, and Tyr56. Asp66, Asp71, and Asp103 together coordinate Mg(2+). Tyr142 lines the substrate pocket.

This sequence belongs to the PPase family. Homohexamer. Mg(2+) serves as cofactor.

The protein localises to the cytoplasm. The enzyme catalyses diphosphate + H2O = 2 phosphate + H(+). Its function is as follows. Catalyzes the hydrolysis of inorganic pyrophosphate (PPi) forming two phosphate ions. The polypeptide is Inorganic pyrophosphatase (Xanthomonas campestris pv. campestris (strain ATCC 33913 / DSM 3586 / NCPPB 528 / LMG 568 / P 25)).